We begin with the raw amino-acid sequence, 554 residues long: Potassium-transporting ATPase potassium-binding subunit (554 aa).

The next 12 membrane-spanning stretches (helical) occupy residues 3–23, 60–80, 131–151, 174–194, 252–272, 279–299, 323–343, 352–372, 375–395, 412–432, 481–501, and 522–542; these read PVLA…LAHV, PAYL…LYLL, GLAV…VALV, VRVL…CGVI, LFEI…FGIM, GYAI…LMMW, FGIG…TGAV, GLGG…PGGV, GLYG…LMVG, FAAC…AAAM, LGLA…ALAG, and LFAG…YFPA.

The protein belongs to the KdpA family. As to quaternary structure, the system is composed of three essential subunits: KdpA, KdpB and KdpC.

The protein localises to the cell membrane. In terms of biological role, part of the high-affinity ATP-driven potassium transport (or Kdp) system, which catalyzes the hydrolysis of ATP coupled with the electrogenic transport of potassium into the cytoplasm. This subunit binds the extracellular potassium ions and delivers the ions to the membrane domain of KdpB through an intramembrane tunnel. The protein is Potassium-transporting ATPase potassium-binding subunit of Streptomyces coelicolor (strain ATCC BAA-471 / A3(2) / M145).